The chain runs to 320 residues: Malate dehydrogenase (320 aa).

Residues 10–15 (GAGQIG) and D34 contribute to the NAD(+) site. Substrate contacts are provided by R83 and R89. Residues N96 and 119 to 121 (ITN) contribute to the NAD(+) site. Substrate-binding residues include N121 and R152. H176 serves as the catalytic Proton acceptor.

Belongs to the LDH/MDH superfamily. MDH type 3 family.

It carries out the reaction (S)-malate + NAD(+) = oxaloacetate + NADH + H(+). Catalyzes the reversible oxidation of malate to oxaloacetate. The chain is Malate dehydrogenase from Methylorubrum extorquens (strain CM4 / NCIMB 13688) (Methylobacterium extorquens).